Here is a 557-residue protein sequence, read N- to C-terminus: MEGSEDASAIVEPPDPEVLEIDPTCRYIRYKEVIGKGASKTVFKGFDEVDGIEVAWNQVRIDDLLQSPDCLERLYSEVRLLKSLKHKNIIRFYNSWIDDKNKTVNIITELFTSGSLRQYRKKHRKVNMKAVKCWARQILTGLKYLHSQDPPIIHRDIKCDNIFINGNHGEVKIGDLGLATVMEQANAKSVIGTPEFMAPELYDENYNELADIYSFGMCMLEMVTFEYPYCECRNSAQIYKKVSSGIKPASLSKVKDPEVMKFIEKCLLPASERLSAEELLLDSFLNVNGLVMNNPLPLPDIVMPKEGSFGERCLMSEGPPNARNRTMSMNLDEDNNLPIVISSNNSGTNCIEVRRAKRGNFFVLKGEENDENSVSLILRIVDENGRVRNIHFLFFQEGDTASNVSSEMVEQLELTDKNVKFIAELIDVLLVNLIPNWKTDVAVDHLIHPQQNQSSKDNHQNGASSQAGESISHSLSSDYCPRSDDEANPTVAATTEDQEAEKPGSLEEEEEDERLKEELEKIEERFREEMKEITRKREEATMETKNRFFEKKMQQVE.

The Protein kinase domain maps to 28–285; the sequence is IRYKEVIGKG…AEELLLDSFL (258 aa). ATP contacts are provided by residues 108–111 and Lys158; that span reads TELF. The active-site Proton acceptor is Asp175. Over residues 451–477 the composition is skewed to polar residues; sequence QNQSSKDNHQNGASSQAGESISHSLSS. The disordered stretch occupies residues 451–517; the sequence is QNQSSKDNHQ…EEEEDERLKE (67 aa). Ser505 bears the Phosphoserine mark.

It belongs to the protein kinase superfamily. Ser/Thr protein kinase family. WNK subfamily.

The catalysed reaction is L-seryl-[protein] + ATP = O-phospho-L-seryl-[protein] + ADP + H(+). It carries out the reaction L-threonyl-[protein] + ATP = O-phospho-L-threonyl-[protein] + ADP + H(+). Its function is as follows. May regulate flowering time by modulating the photoperiod pathway. This chain is Probable serine/threonine-protein kinase WNK7 (WNK7), found in Arabidopsis thaliana (Mouse-ear cress).